A 124-amino-acid chain; its full sequence is Small ribosomal subunit protein uS12 (124 aa).

Aspartate 89 carries the post-translational modification 3-methylthioaspartic acid.

It belongs to the universal ribosomal protein uS12 family. As to quaternary structure, part of the 30S ribosomal subunit. Contacts proteins S8 and S17. May interact with IF1 in the 30S initiation complex.

Its function is as follows. With S4 and S5 plays an important role in translational accuracy. In terms of biological role, interacts with and stabilizes bases of the 16S rRNA that are involved in tRNA selection in the A site and with the mRNA backbone. Located at the interface of the 30S and 50S subunits, it traverses the body of the 30S subunit contacting proteins on the other side and probably holding the rRNA structure together. The combined cluster of proteins S8, S12 and S17 appears to hold together the shoulder and platform of the 30S subunit. The polypeptide is Small ribosomal subunit protein uS12 (Thermoanaerobacter pseudethanolicus (strain ATCC 33223 / 39E) (Clostridium thermohydrosulfuricum)).